The primary structure comprises 331 residues: MAQLFYDSDADLGLLNGKTVAIIGYGSQGHAHALNLKDSGVDVVVGLYEGSRSAEKARADGLEVLSVAEAAAKADWIMVLLPDEFQKDVYAKEIASHLSSGKVLSFAHGFNIRFGLIQPPADVDVVMIAPKGPGHTVRWEYQNGQGVPALFAIEQDASGQARALAMAYAKGIGGTRAGILETNFKEETETDLFGEQAVLCGGLSELVKAGFETLVEAGYQPELAYFECLHEVKLIVDLMVKGGLTAMRDSISNTAEYGDYVSGPRLINADTKAEMKRILADIQDGTFAKNFVAECESGKPEMKKIRDRDANHPIEQVGKGLRAMFSWLKTA.

The KARI N-terminal Rossmann domain occupies 2 to 182; sequence AQLFYDSDAD…GGTRAGILET (181 aa). Residues 25 to 28, S51, S53, and 83 to 86 contribute to the NADP(+) site; these read YGSQ and DEFQ. H108 is a catalytic residue. Residue G134 coordinates NADP(+). Residues 183-328 enclose the KARI C-terminal knotted domain; it reads NFKEETETDL…KGLRAMFSWL (146 aa). Residues D191, E195, E227, and E231 each coordinate Mg(2+). S252 is a substrate binding site.

It belongs to the ketol-acid reductoisomerase family. Requires Mg(2+) as cofactor.

The catalysed reaction is (2R)-2,3-dihydroxy-3-methylbutanoate + NADP(+) = (2S)-2-acetolactate + NADPH + H(+). It catalyses the reaction (2R,3R)-2,3-dihydroxy-3-methylpentanoate + NADP(+) = (S)-2-ethyl-2-hydroxy-3-oxobutanoate + NADPH + H(+). Its pathway is amino-acid biosynthesis; L-isoleucine biosynthesis; L-isoleucine from 2-oxobutanoate: step 2/4. It participates in amino-acid biosynthesis; L-valine biosynthesis; L-valine from pyruvate: step 2/4. Its function is as follows. Involved in the biosynthesis of branched-chain amino acids (BCAA). Catalyzes an alkyl-migration followed by a ketol-acid reduction of (S)-2-acetolactate (S2AL) to yield (R)-2,3-dihydroxy-isovalerate. In the isomerase reaction, S2AL is rearranged via a Mg-dependent methyl migration to produce 3-hydroxy-3-methyl-2-ketobutyrate (HMKB). In the reductase reaction, this 2-ketoacid undergoes a metal-dependent reduction by NADPH to yield (R)-2,3-dihydroxy-isovalerate. In Prochlorococcus marinus (strain MIT 9313), this protein is Ketol-acid reductoisomerase (NADP(+)).